Consider the following 340-residue polypeptide: Adenosine kinase (340 aa).

Residue D293 is part of the active site.

The protein belongs to the carbohydrate kinase PfkB family. Mg(2+) is required as a cofactor.

It catalyses the reaction adenosine + ATP = AMP + ADP + H(+). Its pathway is purine metabolism; AMP biosynthesis via salvage pathway; AMP from adenosine: step 1/1. Functionally, ATP dependent phosphorylation of adenosine and other related nucleoside analogs to monophosphate derivatives. ADO1 does not play a major role in adenine utilization in yeast. Its physiological role could primarily be to recycle adenosine produced by the methyl cycle. This is Adenosine kinase from Saccharomyces cerevisiae (strain ATCC 204508 / S288c) (Baker's yeast).